Reading from the N-terminus, the 262-residue chain is Calbindin (262 aa).

At Thr2 the chain carries N-acetylthreonine. EF-hand domains are found at residues 12 to 47, 54 to 89, 99 to 134, 143 to 178, and 187 to 222; these read ISAAQFFEIWHHYDSDGNGYMDGKELQNFIQELQQA, DLTPEMKAFVDQYGKATDGKIGIVELAQVLPTEENF, KSSEDFMQTWRKYDSDHSGFIDSEELKSFLKDLLQK, KLTEYTEIMLRMFDANNDGKLELTELARLLPVQENF, and MCAKEFNKAFEMYDQDGNGYIDENELDALLKDLCEK. Ca(2+) is bound by residues Asp25, Asp27, Asn29, Tyr31, and Glu36. Ca(2+) is bound by residues Asp112, Asp114, Ser116, Glu123, Asp156, Asn158, Asp160, Lys162, Glu167, Asp200, Asp202, Asn204, Tyr206, and Glu211.

This sequence belongs to the calbindin family. Highly abundant in supporting cells. Also present in hair cells.

Its function is as follows. Buffers cytosolic calcium. May stimulate a membrane Ca(2+)-ATPase and a 3',5'-cyclic nucleotide phosphodiesterase. In Gallus gallus (Chicken), this protein is Calbindin (CALB1).